A 285-amino-acid polypeptide reads, in one-letter code: Bifunctional protein FolD (285 aa).

NADP(+)-binding positions include 166–168, S191, and I232; that span reads GAS.

The protein belongs to the tetrahydrofolate dehydrogenase/cyclohydrolase family. In terms of assembly, homodimer.

It carries out the reaction (6R)-5,10-methylene-5,6,7,8-tetrahydrofolate + NADP(+) = (6R)-5,10-methenyltetrahydrofolate + NADPH. The enzyme catalyses (6R)-5,10-methenyltetrahydrofolate + H2O = (6R)-10-formyltetrahydrofolate + H(+). Its pathway is one-carbon metabolism; tetrahydrofolate interconversion. Functionally, catalyzes the oxidation of 5,10-methylenetetrahydrofolate to 5,10-methenyltetrahydrofolate and then the hydrolysis of 5,10-methenyltetrahydrofolate to 10-formyltetrahydrofolate. This Actinobacillus pleuropneumoniae serotype 7 (strain AP76) protein is Bifunctional protein FolD.